Here is a 1280-residue protein sequence, read N- to C-terminus: Ankyrin repeat and sterile alpha motif domain-containing protein 1B (1280 aa).

7 ANK repeats span residues 2 to 31 (GKEQ…GLLG), 57 to 86 (SGYT…STNV), 90 to 119 (KGCF…SHSR), 126 to 155 (EKET…DPSM), 159 to 188 (RGET…NLMS), 192 to 221 (RKHT…DVNT), and 224 to 253 (EKGS…DANI). Disordered stretches follow at residues 299-322 (RHRP…LRHK), 361-399 (MESF…EEKS), 479-573 (SVSD…STGS), 704-723 (NGEA…SNTG), and 755-791 (SNLV…PSFT). The segment covering 482–491 (DAERGNHGDD) has biased composition (basic and acidic residues). Composition is skewed to polar residues over residues 520 to 550 (KQRT…SSLG), 707 to 723 (ARSN…SNTG), and 770 to 782 (SRGQ…SSPS). 2 consecutive SAM domains span residues 824–890 (CPVQ…LPRV) and 898–963 (NNPT…RLHE). Disordered stretches follow at residues 960-994 (RLHE…LSQA) and 1208-1243 (GSST…MDQK). The segment covering 980–994 (GNHTPPQLSPSLSQA) has biased composition (polar residues). The region spanning 1071 to 1223 (IFQSCDYEAY…ESFDSKPSKP (153 aa)) is the PID domain.

It is found in the cytoplasm. The polypeptide is Ankyrin repeat and sterile alpha motif domain-containing protein 1B (anks1b) (Danio rerio (Zebrafish)).